A 265-amino-acid chain; its full sequence is Undecaprenyl-diphosphatase (265 aa).

7 consecutive transmembrane segments (helical) span residues 41 to 61 (IAYT…LIYF), 75 to 95 (LKFL…LYVI), 104 to 124 (YNPS…GIYI), 137 to 157 (LSTK…LPGV), 180 to 200 (YSYL…LLFT), 215 to 235 (GIAL…GFLL), and 244 to 264 (YLID…GLII).

This sequence belongs to the UppP family.

The protein resides in the cell membrane. The catalysed reaction is di-trans,octa-cis-undecaprenyl diphosphate + H2O = di-trans,octa-cis-undecaprenyl phosphate + phosphate + H(+). In terms of biological role, catalyzes the dephosphorylation of undecaprenyl diphosphate (UPP). The polypeptide is Undecaprenyl-diphosphatase (Saccharolobus islandicus (strain Y.G.57.14 / Yellowstone #1) (Sulfolobus islandicus)).